A 404-amino-acid polypeptide reads, in one-letter code: Phospho-N-acetylmuramoyl-pentapeptide-transferase (404 aa).

10 consecutive transmembrane segments (helical) span residues 30-50, 73-93, 100-120, 132-152, 209-229, 242-262, 274-294, 301-321, 326-346, and 381-401; these read SAAI…IIFF, IPTM…LLFA, IMLL…DDYI, GKFK…TLIF, YMWI…SNGA, TSAI…NVIF, LAEL…FLWY, IFMG…LAIV, LMIP…IIQV, and KIVT…LVTL.

The protein belongs to the glycosyltransferase 4 family. MraY subfamily. It depends on Mg(2+) as a cofactor.

The protein localises to the cell inner membrane. The catalysed reaction is UDP-N-acetyl-alpha-D-muramoyl-L-alanyl-gamma-D-glutamyl-meso-2,6-diaminopimeloyl-D-alanyl-D-alanine + di-trans,octa-cis-undecaprenyl phosphate = di-trans,octa-cis-undecaprenyl diphospho-N-acetyl-alpha-D-muramoyl-L-alanyl-D-glutamyl-meso-2,6-diaminopimeloyl-D-alanyl-D-alanine + UMP. Its pathway is cell wall biogenesis; peptidoglycan biosynthesis. Its function is as follows. Catalyzes the initial step of the lipid cycle reactions in the biosynthesis of the cell wall peptidoglycan: transfers peptidoglycan precursor phospho-MurNAc-pentapeptide from UDP-MurNAc-pentapeptide onto the lipid carrier undecaprenyl phosphate, yielding undecaprenyl-pyrophosphoryl-MurNAc-pentapeptide, known as lipid I. The polypeptide is Phospho-N-acetylmuramoyl-pentapeptide-transferase (Amoebophilus asiaticus (strain 5a2)).